A 128-amino-acid polypeptide reads, in one-letter code: Small ribosomal subunit protein uS11 (128 aa).

The protein belongs to the universal ribosomal protein uS11 family. Part of the 30S ribosomal subunit. Interacts with proteins S7 and S18. Binds to IF-3.

In terms of biological role, located on the platform of the 30S subunit, it bridges several disparate RNA helices of the 16S rRNA. Forms part of the Shine-Dalgarno cleft in the 70S ribosome. The chain is Small ribosomal subunit protein uS11 from Chloroherpeton thalassium (strain ATCC 35110 / GB-78).